Reading from the N-terminus, the 548-residue chain is Probable malate:quinone oxidoreductase (548 aa).

The tract at residues 520-548 is disordered; that stretch reads YDRPQAADSTPKPQLKPQPVQKEVADIAL. The segment covering 530-541 has biased composition (low complexity); the sequence is PKPQLKPQPVQK.

This sequence belongs to the MQO family. FAD is required as a cofactor.

The enzyme catalyses (S)-malate + a quinone = a quinol + oxaloacetate. It participates in carbohydrate metabolism; tricarboxylic acid cycle; oxaloacetate from (S)-malate (quinone route): step 1/1. The protein is Probable malate:quinone oxidoreductase of Shigella dysenteriae serotype 1 (strain Sd197).